Consider the following 354-residue polypeptide: Guanine nucleotide-binding protein G(o) subunit alpha (354 aa).

The N-myristoyl glycine moiety is linked to residue Gly2. Residue Cys3 is the site of S-palmitoyl cysteine attachment. Residues 32–354 (KDIKLLLLGA…ANNLRGCGLY (323 aa)) enclose the G-alpha domain. Residues 35–48 (KLLLLGAGESGKST) form a G1 motif region. Residues 40-47 (GAGESGKS), 176-182 (LRTRVKT), 201-205 (DVGGQ), 270-273 (NKKD), and Ala326 contribute to the GTP site. Mg(2+)-binding residues include Ser47 and Thr182. The tract at residues 174–182 (DILRTRVKT) is G2 motif. Residues 197–206 (FKLFDVGGQR) are G3 motif. The interval 266–273 (ILFLNKKD) is G4 motif. The G5 motif stretch occupies residues 324 to 329 (TCATDT).

Belongs to the G-alpha family. G(i/o/t/z) subfamily. In terms of assembly, g proteins are composed of 3 units; alpha, beta and gamma. The alpha chain contains the guanine nucleotide binding site.

Guanine nucleotide-binding proteins (G proteins) are involved as modulators or transducers in various transmembrane signaling systems. The G(o) protein function is not clear. This Locusta migratoria (Migratory locust) protein is Guanine nucleotide-binding protein G(o) subunit alpha.